A 264-amino-acid chain; its full sequence is 3-methyl-2-oxobutanoate hydroxymethyltransferase 2 (264 aa).

2 residues coordinate Mg(2+): Asp44 and Asp83. Residues 44-45 (DS), Asp83, and Lys111 contribute to the 3-methyl-2-oxobutanoate site. Mg(2+) is bound at residue Glu113. Glu180 acts as the Proton acceptor in catalysis.

Belongs to the PanB family. In terms of assembly, homodecamer; pentamer of dimers. Mg(2+) is required as a cofactor.

It is found in the cytoplasm. The catalysed reaction is 3-methyl-2-oxobutanoate + (6R)-5,10-methylene-5,6,7,8-tetrahydrofolate + H2O = 2-dehydropantoate + (6S)-5,6,7,8-tetrahydrofolate. It participates in cofactor biosynthesis; (R)-pantothenate biosynthesis; (R)-pantoate from 3-methyl-2-oxobutanoate: step 1/2. Its function is as follows. Catalyzes the reversible reaction in which hydroxymethyl group from 5,10-methylenetetrahydrofolate is transferred onto alpha-ketoisovalerate to form ketopantoate. The polypeptide is 3-methyl-2-oxobutanoate hydroxymethyltransferase 2 (Hahella chejuensis (strain KCTC 2396)).